A 228-amino-acid polypeptide reads, in one-letter code: Ribose-5-phosphate isomerase A (228 aa).

Substrate is bound by residues 32 to 35, 85 to 88, and 98 to 101; these read TGST, DGAD, and KGGG. The active-site Proton acceptor is Glu107. Lys125 is a binding site for substrate.

Belongs to the ribose 5-phosphate isomerase family. Homodimer.

It catalyses the reaction aldehydo-D-ribose 5-phosphate = D-ribulose 5-phosphate. It participates in carbohydrate degradation; pentose phosphate pathway; D-ribose 5-phosphate from D-ribulose 5-phosphate (non-oxidative stage): step 1/1. Functionally, catalyzes the reversible conversion of ribose-5-phosphate to ribulose 5-phosphate. This is Ribose-5-phosphate isomerase A from Ralstonia nicotianae (strain ATCC BAA-1114 / GMI1000) (Ralstonia solanacearum).